We begin with the raw amino-acid sequence, 624 residues long: Chaperone protein HtpG (624 aa).

Residues 1-336 (MKGQETRGFQ…SSDLPLNVSR (336 aa)) are a; substrate-binding. The tract at residues 337–552 (EILQDSTVTR…ADEMSTQMAK (216 aa)) is b. Residues 553-624 (LFAAAGQKVP…IRRMNQLLVS (72 aa)) form a c region.

This sequence belongs to the heat shock protein 90 family. As to quaternary structure, homodimer.

The protein localises to the cytoplasm. Molecular chaperone. Has ATPase activity. This Escherichia coli O1:K1 / APEC protein is Chaperone protein HtpG.